Consider the following 214-residue polypeptide: Phosphatidylserine decarboxylase proenzyme (214 aa).

The active-site Schiff-base intermediate with substrate; via pyruvic acid is the serine 182. Serine 182 carries the post-translational modification Pyruvic acid (Ser); by autocatalysis.

The protein belongs to the phosphatidylserine decarboxylase family. PSD-A subfamily. Heterodimer of a large membrane-associated beta subunit and a small pyruvoyl-containing alpha subunit. Requires pyruvate as cofactor. Is synthesized initially as an inactive proenzyme. Formation of the active enzyme involves a self-maturation process in which the active site pyruvoyl group is generated from an internal serine residue via an autocatalytic post-translational modification. Two non-identical subunits are generated from the proenzyme in this reaction, and the pyruvate is formed at the N-terminus of the alpha chain, which is derived from the carboxyl end of the proenzyme. The post-translation cleavage follows an unusual pathway, termed non-hydrolytic serinolysis, in which the side chain hydroxyl group of the serine supplies its oxygen atom to form the C-terminus of the beta chain, while the remainder of the serine residue undergoes an oxidative deamination to produce ammonia and the pyruvoyl prosthetic group on the alpha chain.

It is found in the cell membrane. It carries out the reaction a 1,2-diacyl-sn-glycero-3-phospho-L-serine + H(+) = a 1,2-diacyl-sn-glycero-3-phosphoethanolamine + CO2. It functions in the pathway phospholipid metabolism; phosphatidylethanolamine biosynthesis; phosphatidylethanolamine from CDP-diacylglycerol: step 2/2. In terms of biological role, catalyzes the formation of phosphatidylethanolamine (PtdEtn) from phosphatidylserine (PtdSer). This chain is Phosphatidylserine decarboxylase proenzyme, found in Burkholderia ambifaria (strain MC40-6).